The chain runs to 457 residues: NADP-specific glutamate dehydrogenase (457 aa).

Residue lysine 113 is part of the active site.

Belongs to the Glu/Leu/Phe/Val dehydrogenases family. Homohexamer.

It catalyses the reaction L-glutamate + NADP(+) + H2O = 2-oxoglutarate + NH4(+) + NADPH + H(+). This is NADP-specific glutamate dehydrogenase (GDH) from Tuber borchii (White truffle).